Reading from the N-terminus, the 220-residue chain is Iron-sulfur cluster repair protein YtfE (220 aa).

Belongs to the RIC family. YtfE subfamily. Homodimer.

Its subcellular location is the cytoplasm. Di-iron-containing protein involved in the repair of iron-sulfur clusters damaged by oxidative and nitrosative stress conditions. The sequence is that of Iron-sulfur cluster repair protein YtfE from Escherichia coli O8 (strain IAI1).